Consider the following 168-residue polypeptide: Ubiquitin-fold modifier-conjugating enzyme 1 (168 aa).

Cys116 functions as the Glycyl thioester intermediate in the catalytic mechanism.

Belongs to the ubiquitin-conjugating enzyme family. UFC1 subfamily.

In terms of biological role, E2-like enzyme which forms an intermediate with UFM1 via a thioester linkage. The protein is Ubiquitin-fold modifier-conjugating enzyme 1 of Trichoplax adhaerens (Trichoplax reptans).